Here is a 314-residue protein sequence, read N- to C-terminus: Aspartate carbamoyltransferase catalytic subunit (314 aa).

Positions 53 and 54 each coordinate carbamoyl phosphate. Lysine 82 serves as a coordination point for L-aspartate. Carbamoyl phosphate contacts are provided by arginine 103, histidine 131, and glutamine 134. L-aspartate is bound by residues arginine 164 and arginine 230. Leucine 267 and proline 268 together coordinate carbamoyl phosphate.

It belongs to the aspartate/ornithine carbamoyltransferase superfamily. ATCase family. In terms of assembly, heterooligomer of catalytic and regulatory chains.

It catalyses the reaction carbamoyl phosphate + L-aspartate = N-carbamoyl-L-aspartate + phosphate + H(+). It functions in the pathway pyrimidine metabolism; UMP biosynthesis via de novo pathway; (S)-dihydroorotate from bicarbonate: step 2/3. Functionally, catalyzes the condensation of carbamoyl phosphate and aspartate to form carbamoyl aspartate and inorganic phosphate, the committed step in the de novo pyrimidine nucleotide biosynthesis pathway. In Methanococcus aeolicus (strain ATCC BAA-1280 / DSM 17508 / OCM 812 / Nankai-3), this protein is Aspartate carbamoyltransferase catalytic subunit.